Here is a 117-residue protein sequence, read N- to C-terminus: MTRAKSGKISKNRHKKILKLAKGYRGRANSCFRVAIEKVEKALQYAYRDRRNRKRDFRGLWIQRINAAVREHGLVYSQFMGALKKAEIDIDRKVLAELAVNNSDGFASIIEQAKAHI.

It belongs to the bacterial ribosomal protein bL20 family.

Its function is as follows. Binds directly to 23S ribosomal RNA and is necessary for the in vitro assembly process of the 50S ribosomal subunit. It is not involved in the protein synthesizing functions of that subunit. This Rickettsia felis (strain ATCC VR-1525 / URRWXCal2) (Rickettsia azadi) protein is Large ribosomal subunit protein bL20.